Consider the following 451-residue polypeptide: uncharacterized protein (451 aa).

The 176-residue stretch at Leu29 to Ile204 folds into the FAD-binding PCMH-type domain. The residue at position 66 (His66) is a Pros-8alpha-FAD histidine.

This sequence belongs to the oxygen-dependent FAD-linked oxidoreductase family. FAD serves as cofactor.

This is an uncharacterized protein from Bacillus subtilis (strain 168).